The primary structure comprises 170 residues: Protein SprT (170 aa).

Positions 22–165 (LQLANQHLGT…RQCGEKLQFI (144 aa)) constitute a SprT-like domain. His-78 serves as a coordination point for Zn(2+). Glu-79 is a catalytic residue. Residue His-82 participates in Zn(2+) binding.

The protein belongs to the SprT family. Zn(2+) serves as cofactor.

Its subcellular location is the cytoplasm. The polypeptide is Protein SprT (Yersinia pseudotuberculosis serotype IB (strain PB1/+)).